The primary structure comprises 470 residues: Na(+)/H(+) antiporter NhaA 2 (470 aa).

11 helical membrane-spanning segments follow: residues 34 to 54, 85 to 105, 121 to 141, 150 to 170, 179 to 199, 202 to 222, 241 to 261, 317 to 337, 357 to 377, 395 to 415, and 423 to 443; these read FLHI…IALL, LEWV…GMEI, ALPA…YLLL, GWGV…TLLG, VLLL…IAVF, SGVA…VFAM, WAGV…IGLI, SLIA…FALA, LATA…ACWL, LLVL…IAQL, and LAAG…VALV.

This sequence belongs to the NhaA Na(+)/H(+) (TC 2.A.33) antiporter family.

It localises to the cell inner membrane. It catalyses the reaction Na(+)(in) + 2 H(+)(out) = Na(+)(out) + 2 H(+)(in). In terms of biological role, na(+)/H(+) antiporter that extrudes sodium in exchange for external protons. This Myxococcus xanthus (strain DK1622) protein is Na(+)/H(+) antiporter NhaA 2.